The following is a 300-amino-acid chain: Merozoite surface protein 2 (300 aa).

The first 20 residues, 1–20 (MKVIKTLSIINFFIFVTFNI), serve as a signal peptide directing secretion. Residues Asn-22 and Asn-36 are each glycosylated (N-linked (GlcNAc...) asparagine). The polymorphic region stretch occupies residues 44-226 (EESKPPTGAV…EQTESPELQS (183 aa)). The 1; inverted repeat unit spans residues 51–58 (GAVAGSGA). The segment at 51-74 (GAVAGSGAGAGSGAGAVAGSGAGA) is 7 X 8 AA tandem repeats of G-S-G-A-G-A-V-A. 5 repeat units span residues 61 to 68 (GSGAGAVA), 69 to 76 (GSGAGAVA), 77 to 84 (GSGAGAVA), 85 to 92 (GSGAGAVA), and 93 to 100 (GSGAGAVA). The 7; inverted repeat unit spans residues 103-110 (GAVAGSGA). Positions 111–261 (GNGANPGADA…DSQKECTDGN (151 aa)) are disordered. A compositionally biased stretch (low complexity) spans 124-148 (PSTPATTTTTTTTNDAEASTSTSSE). Residues 149–165 (NRNHNNAETNPKGKGEV) show a composition bias toward basic and acidic residues. Polar residues-rich tracts occupy residues 167 to 193 (KPNQANKETQNNSNVQQDSQTKSNVPR) and 200 to 228 (KSPTAQPEQAENSAPTAEQTESPELQSAP). A glycan (N-linked (GlcNAc...) asparagine) is linked at Asn-177. An N-linked (GlcNAc...) asparagine glycan is attached at Asn-249. The cysteines at positions 257 and 265 are disulfide-linked. Residues Asn-273 and Asn-274 are each glycosylated (N-linked (GlcNAc...) asparagine). Residue Asn-274 is the site of GPI-anchor amidated asparagine attachment. Positions 275 to 300 (SSNIASINKFVVLISATLVLSFAIFI) are cleaved as a propeptide — removed in mature form.

The protein localises to the cell membrane. In terms of biological role, may play a role in the merozoite attachment to the erythrocyte. The protein is Merozoite surface protein 2 of Plasmodium falciparum (isolate mad71 / Papua New Guinea).